Here is a 205-residue protein sequence, read N- to C-terminus: Protein MIS12 homolog (205 aa).

A coiled-coil region spans residues 108-205; the sequence is PYSEEDFQHL…EKESKRLKIS (98 aa).

It belongs to the mis12 family. As to quaternary structure, component of the MIS12 complex composed of MIS12, DSN1, NSL1 and PMF1. Also interacts with KNL1, CBX3, CBX5, NDC80 and ZWINT.

It is found in the chromosome. It localises to the centromere. The protein localises to the kinetochore. Functionally, part of the MIS12 complex which is required for normal chromosome alignment and segregation and for kinetochore formation during mitosis. Essential for proper kinetochore microtubule attachments. The chain is Protein MIS12 homolog from Homo sapiens (Human).